Reading from the N-terminus, the 631-residue chain is Anthrax toxin receptor-like (631 aa).

The first 27 residues, 1–27, serve as a signal peptide directing secretion; that stretch reads MGSHESLGPYFLVFLLLLLLPPPLFRA. The Extracellular portion of the chain corresponds to 28–353; sequence GSLRYHGPDW…TSTTCGIFRN (326 aa). A VWFA domain is found at 76–246; sequence DLYFILDKSG…KALRSTIDAL (171 aa). Residues Ser84, Ser86, and Thr150 each contribute to the a divalent metal cation site. Residues 354–374 form a helical membrane-spanning segment; the sequence is WLYFVPLLLLVPLLLCCVWRL. The Cytoplasmic segment spans residues 375–631; the sequence is CRKQTVKEPP…LSLPPSEPNF (257 aa). Residues 382-413 form a disordered region; sequence EPPPVQKPEKEPEQEKPPSPPPPPPPPPPPLP. The segment covering 388–397 has biased composition (basic and acidic residues); the sequence is KPEKEPEQEK. Over residues 398 to 413 the composition is skewed to pro residues; the sequence is PPSPPPPPPPPPPPLP.

This sequence belongs to the ATR family.

The protein localises to the membrane. This is Anthrax toxin receptor-like (ANTXRL) from Homo sapiens (Human).